The sequence spans 195 residues: Interferon tau-6 (195 aa).

The first 23 residues, 1–23 (MAFVLSLLMALVLVSYGPGGSLG), serve as a signal peptide directing secretion. Cystine bridges form between cysteine 24/cysteine 122 and cysteine 52/cysteine 162. N-linked (GlcNAc...) asparagine glycosylation occurs at asparagine 101.

Belongs to the alpha/beta interferon family. IFN-alphaII subfamily. Constitutively and exclusively expressed in the mononuclear cells of the extraembryonic trophectoderm.

The protein resides in the secreted. Functionally, paracrine hormone primarily responsible for maternal recognition of pregnancy. Interacts with endometrial receptors, probably type I interferon receptors, and blocks estrogen receptor expression, preventing the estrogen-induced increase in oxytocin receptor expression in the endometrium. This results in the suppression of the pulsatile endometrial release of the luteolytic hormone prostaglandin F2-alpha, hindering the regression of the corpus luteum (luteolysis) and therefore a return to ovarian cyclicity. This, and a possible direct effect of IFN-tau on prostaglandin synthesis, leads in turn to continued ovarian progesterone secretion, which stimulates the secretion by the endometrium of the nutrients required for the growth of the conceptus. In summary, displays particularly high antiviral and antiproliferative potency concurrently with particular weak cytotoxicity, high antiluteolytic activity and immunomodulatory properties. In contrast with other IFNs, IFN-tau is not virally inducible. In Ovis aries (Sheep), this protein is Interferon tau-6 (IFNT6).